Here is a 305-residue protein sequence, read N- to C-terminus: L-lactate dehydrogenase (305 aa).

NAD(+) is bound by residues valine 11, aspartate 32, lysine 37, and 76-77; that span reads GV. Residues glutamine 79, arginine 85, and 117 to 120 contribute to the substrate site; that span reads NPVD. NAD(+) contacts are provided by residues 115–117 and serine 140; that span reads ATN. Residue 145–148 participates in substrate binding; that stretch reads DTAR. Beta-D-fructose 1,6-bisphosphate contacts are provided by arginine 150 and histidine 165. The active-site Proton acceptor is histidine 172. Tyrosine 218 carries the phosphotyrosine modification. Threonine 227 contributes to the substrate binding site.

This sequence belongs to the LDH/MDH superfamily. LDH family. As to quaternary structure, homotetramer.

It localises to the cytoplasm. It carries out the reaction (S)-lactate + NAD(+) = pyruvate + NADH + H(+). It functions in the pathway fermentation; pyruvate fermentation to lactate; (S)-lactate from pyruvate: step 1/1. Allosterically activated by fructose 1,6-bisphosphate (FBP). Functionally, catalyzes the conversion of lactate to pyruvate. This is L-lactate dehydrogenase from Chloroherpeton thalassium (strain ATCC 35110 / GB-78).